A 4588-amino-acid chain; its full sequence is Protocadherin Fat 1 (4588 aa).

Residues 1-21 (MGRHLALLLLLLLLFQHFGDS) form the signal peptide. At 22-4181 (DGSQRLEQTP…STPWNIGLAE (4160 aa)) the chain is on the extracellular side. 2 Cadherin domains span residues 35–149 (THLE…RPLF) and 150–257 (SPTS…APVI). Asparagine 40 carries N-linked (GlcNAc...) asparagine glycosylation. Asparagine 333 is a glycosylation site (N-linked (GlcNAc...) asparagine). Cadherin domains are found at residues 368 to 463 (EKDV…PPEF), 464 to 569 (TQTA…TPLF), 570 to 673 (EKIN…VNLQ), 718 to 822 (STLP…PPEF), 823 to 927 (LQES…PPTF), 928 to 1034 (IPPN…PPVF), 1035 to 1139 (SSFV…APQT), 1140 to 1245 (SEPV…KPQF), 1246 to 1357 (LQKF…EPIS), 1359 to 1456 (EESF…RPQF), 1457 to 1562 (STSK…APWF), 1563 to 1667 (TASS…SPKF), 1668 to 1765 (TSKE…APVF), 1766 to 1879 (MQAE…PPVF), 1880 to 1979 (AKPL…HLKF), 1980 to 2081 (TQDV…APVF), 2082 to 2182 (VNLP…MPVF), 2183 to 2283 (EKPF…PPVF), 2284 to 2390 (AQQS…PPLF), 2391 to 2492 (EQQI…SPAF), 2493 to 2596 (LQNE…APQF), 2597 to 2703 (RATK…LPKF), 2704 to 2809 (SEPF…SPVF), 2810 to 2918 (ESSP…PPRF), 2919 to 3023 (TAEI…SPVC), 3024 to 3125 (EKTL…APEF), 3126 to 3230 (SADP…PPVF), 3231 to 3335 (EYRE…TPVF), 3336 to 3440 (SQDT…APVF), 3441 to 3545 (SRGN…PPAI), and 3546 to 3647 (LPLE…AIRF). N-linked (GlcNAc...) asparagine glycosylation is found at asparagine 660, asparagine 740, and asparagine 791. Asparagine 998 carries an N-linked (GlcNAc...) asparagine glycan. Asparagine 1426 and asparagine 1551 each carry an N-linked (GlcNAc...) asparagine glycan. 5 N-linked (GlcNAc...) asparagine glycosylation sites follow: asparagine 1748, asparagine 1864, asparagine 1902, asparagine 1940, and asparagine 1991. 2 N-linked (GlcNAc...) asparagine glycosylation sites follow: asparagine 2325 and asparagine 2464. Asparagine 3324, asparagine 3422, asparagine 3444, asparagine 3613, asparagine 3640, and asparagine 3716 each carry an N-linked (GlcNAc...) asparagine glycan. The 38-residue stretch at 3790 to 3827 (VHHGCEDDPCPEGSECVSDPWEEKHTCVCPSGRFGQCP) folds into the EGF-like 1 domain. Disulfide bonds link cysteine 3794/cysteine 3805, cysteine 3799/cysteine 3816, cysteine 3818/cysteine 3826, cysteine 3976/cysteine 4009, cysteine 4017/cysteine 4028, cysteine 4022/cysteine 4038, cysteine 4040/cysteine 4049, cysteine 4056/cysteine 4067, cysteine 4061/cysteine 4076, cysteine 4078/cysteine 4087, cysteine 4093/cysteine 4104, cysteine 4098/cysteine 4113, cysteine 4115/cysteine 4124, cysteine 4131/cysteine 4142, and cysteine 4136/cysteine 4151. Residues 3829-4009 (SSSMTLTGNS…EESVDVSPGC (181 aa)) enclose the Laminin G-like domain. 3 EGF-like domains span residues 4013 to 4050 (ATED…THCE), 4052 to 4088 (SVNP…QRCQ), and 4089 to 4125 (LSPY…ERCQ). The EGF-like 5; calcium-binding domain maps to 4127 to 4163 (DIDECSGNPCLHGALCENTHGSYHCNCSHEYRGRHCE). A glycan (N-linked (GlcNAc...) asparagine) is linked at asparagine 4152. Cysteines 4153 and 4162 form a disulfide. Residues 4182–4202 (GIGIVVFVAGIFLLVVVFVLC) traverse the membrane as a helical segment. Topologically, residues 4203–4588 (RKMISRKKKH…PLDSQQHTEV (386 aa)) are cytoplasmic. The Nuclear localization signal motif lies at 4204–4214 (KMISRKKKHQA). 3 disordered regions span residues 4255–4275 (SYTP…SFEG), 4303–4327 (SVAP…QKPS), and 4343–4376 (LSKK…SESC). Polar residues predominate over residues 4256 to 4265 (YTPSIPSDSR). Over residues 4363 to 4374 (SEVQSLSSFQSE) the composition is skewed to polar residues. A PTB-like motif motif is present at residues 4378-4382 (DNGYH). Disordered stretches follow at residues 4435-4479 (FPPP…SSSR) and 4565-4588 (ESGD…HTEV).

As to quaternary structure, interacts (via the C-terminus 4300-4400 AA) with ATN1. Interacts with RERE. In terms of processing, undergoes proteolytic cleavage. The extracellular domain is cleaved off and the cytoplasmic domain (about 400 AA) shuttles to the nucleus. Expressed in many epithelial and some endothelial and smooth muscle cells.

It localises to the cell membrane. Its subcellular location is the nucleus. In terms of biological role, plays an essential role for cellular polarization, directed cell migration and modulating cell-cell contact. This Homo sapiens (Human) protein is Protocadherin Fat 1 (FAT1).